A 453-amino-acid polypeptide reads, in one-letter code: Lysine histidine transporter-like 1 (453 aa).

The Cytoplasmic segment spans residues 1 to 44 (MYIQMTDGVPPPPEQSSLDHRIDELERQKEIDDWLPITSSRNAK). Transmembrane regions (helical) follow at residues 45-65 (WWYS…LGLP) and 66-86 (FFMA…SWII). At 87–122 (TLYTLWQMVEMHEMVPGKRFDRYHELGQFAFGERLG) the chain is on the cytoplasmic side. The helical transmembrane segment at 123-143 (LYIIVPQQIIVEVGVCIVYMV) threads the bilayer. The Extracellular segment spans residues 144–164 (TGGQSLKKFHEIACQDCSPIR). A helical membrane pass occupies residues 165 to 185 (LSFFIMIFASSHFVLSHLPNF). At 186-187 (NS) the chain is on the cytoplasmic side. The helical transmembrane segment at 188-208 (ISGVSLVAAVMSLSYSTIAWT) threads the bilayer. Residues 209 to 231 (ATAAKGVQEDVQYGYKSGTTAST) are Extracellular-facing. Residues 232–252 (VLSFFTGLGGIAFAYAGHNVV) form a helical membrane-spanning segment. The Cytoplasmic portion of the chain corresponds to 253–276 (LEIQATIPSTPSNPSKGPMWRGVV). Residues 277–297 (VAYVVVALCYFPVALVGYGVF) traverse the membrane as a helical segment. At 298–318 (GNAVLDNVLMSLETPVWAIAT) the chain is on the extracellular side. Residues 319-339 (ANLFVVMHVIGSYQIFAMPVF) traverse the membrane as a helical segment. The Cytoplasmic segment spans residues 340 to 359 (DMVETFLVKKLNFKPSTVLR). A helical transmembrane segment spans residues 360 to 382 (FIVRNVYVALTMFIGIMIPFFGG). The Extracellular portion of the chain corresponds to 383–385 (LLA). Residues 386-408 (FFGGFAFAPTSYFLPCIMWLLIY) form a helical membrane-spanning segment. Residues 409–412 (KPKR) lie on the Cytoplasmic side of the membrane. A helical membrane pass occupies residues 413-433 (FSLSWWTNWVCIVLGVVLMIL). The Extracellular portion of the chain corresponds to 434–453 (SSIGGLRQIIIQSKDYSFFS).

The protein belongs to the amino acid/polyamine transporter 2 family. Amino acid/auxin permease (AAAP) (TC 2.A.18.2) subfamily.

The protein resides in the cell membrane. Functionally, amino acid transporter. In Arabidopsis thaliana (Mouse-ear cress), this protein is Lysine histidine transporter-like 1.